Here is a 93-residue protein sequence, read N- to C-terminus: Small ribosomal subunit protein uS19 (93 aa).

This sequence belongs to the universal ribosomal protein uS19 family.

Functionally, protein S19 forms a complex with S13 that binds strongly to the 16S ribosomal RNA. The chain is Small ribosomal subunit protein uS19 from Kocuria rhizophila (strain ATCC 9341 / DSM 348 / NBRC 103217 / DC2201).